The chain runs to 355 residues: Protein pelota homolog (355 aa).

It belongs to the eukaryotic release factor 1 family. Pelota subfamily. In terms of assembly, monomer. It depends on a divalent metal cation as a cofactor.

Its subcellular location is the cytoplasm. In terms of biological role, may function in recognizing stalled ribosomes, interact with stem-loop structures in stalled mRNA molecules, and effect endonucleolytic cleavage of the mRNA. May play a role in the release non-functional ribosomes and degradation of damaged mRNAs. Has endoribonuclease activity. This Halorubrum lacusprofundi (strain ATCC 49239 / DSM 5036 / JCM 8891 / ACAM 34) protein is Protein pelota homolog.